Consider the following 2507-residue polypeptide: Putative neurobeachin homolog (2507 aa).

3 disordered regions span residues 1–109 (MEIS…PPLP), 1307–1377 (PSSP…DGGR), and 1629–1649 (SRHE…EISE). The span at 24-37 (PVEEGEEVNDEESN) shows a compositional bias: acidic residues. Positions 1317–1340 (TTQKQENSENVNSETSPENGSNGK) are enriched in polar residues. Over residues 1360–1372 (DGEEEENGEEGQG) the composition is skewed to acidic residues. The BEACH-type PH domain occupies 1690–1798 (PSSQSACFST…AVKKVVYQLP (109 aa)). The 290-residue stretch at 1817 to 2106 (MTPRQLFKHS…QLLTEAHPPR (290 aa)) folds into the BEACH domain. 4 WD repeats span residues 2265–2308 (GHGD…GFIA), 2326–2365 (GHEA…LRRI), 2405–2444 (LVDD…KLYT), and 2447–2486 (PLNS…WHYE).

It belongs to the WD repeat neurobeachin family. In terms of assembly, interacts with RII subunit of PKA. As to expression, expressed in vulval precursor cells and rectal epithelia in L2 and L3 larvae. In L4 larvae, expression is seen in intestinal epithelial cells.

The protein resides in the cytoplasm. It localises to the membrane. The protein localises to the nucleus. Functionally, binds to type II regulatory subunits of protein kinase A and anchors/targets them to the membrane. May anchor the kinase to cytoskeletal and/or organelle-associated proteins. Regulates endosomal traffic in polarized epithelial cells such as the vulval precursor cells and intestinal cells. Thought to act as a negative regulator of lin-12 activity in vulval precursor cells. May have a role in the internalization process from basolateral surface of polarized epithelial cells. This Caenorhabditis elegans protein is Putative neurobeachin homolog (sel-2).